A 274-amino-acid chain; its full sequence is Bis(5'-nucleosyl)-tetraphosphatase, symmetrical (274 aa).

This sequence belongs to the Ap4A hydrolase family.

It carries out the reaction P(1),P(4)-bis(5'-adenosyl) tetraphosphate + H2O = 2 ADP + 2 H(+). Hydrolyzes diadenosine 5',5'''-P1,P4-tetraphosphate to yield ADP. The chain is Bis(5'-nucleosyl)-tetraphosphatase, symmetrical from Shewanella oneidensis (strain ATCC 700550 / JCM 31522 / CIP 106686 / LMG 19005 / NCIMB 14063 / MR-1).